A 293-amino-acid chain; its full sequence is Glycine--tRNA ligase alpha subunit (293 aa).

It belongs to the class-II aminoacyl-tRNA synthetase family. In terms of assembly, tetramer of two alpha and two beta subunits.

It localises to the cytoplasm. The enzyme catalyses tRNA(Gly) + glycine + ATP = glycyl-tRNA(Gly) + AMP + diphosphate. This is Glycine--tRNA ligase alpha subunit from Acaryochloris marina (strain MBIC 11017).